A 299-amino-acid polypeptide reads, in one-letter code: Bifunctional protein FolD (299 aa).

NADP(+) contacts are provided by residues 169–171, Ser-194, and Ile-235; that span reads GRS.

Belongs to the tetrahydrofolate dehydrogenase/cyclohydrolase family. Homodimer.

The enzyme catalyses (6R)-5,10-methylene-5,6,7,8-tetrahydrofolate + NADP(+) = (6R)-5,10-methenyltetrahydrofolate + NADPH. The catalysed reaction is (6R)-5,10-methenyltetrahydrofolate + H2O = (6R)-10-formyltetrahydrofolate + H(+). Its pathway is one-carbon metabolism; tetrahydrofolate interconversion. Its function is as follows. Catalyzes the oxidation of 5,10-methylenetetrahydrofolate to 5,10-methenyltetrahydrofolate and then the hydrolysis of 5,10-methenyltetrahydrofolate to 10-formyltetrahydrofolate. This chain is Bifunctional protein FolD, found in Trichormus variabilis (strain ATCC 29413 / PCC 7937) (Anabaena variabilis).